A 1191-amino-acid polypeptide reads, in one-letter code: Rho GTPase-activating protein 20 (1191 aa).

Positions 1–23 (MEAMSPQQETLGGQPGRSSSLTG) are enriched in polar residues. The disordered stretch occupies residues 1–45 (MEAMSPQQETLGGQPGRSSSLTGVSRLAGGSCTKKKMKTLAERRR). Ser46 carries the post-translational modification Phosphoserine. The region spanning 78 to 180 (SLVCSNRTLL…EQKDKWLSLL (103 aa)) is the PH domain. One can recognise a Ras-associating domain in the interval 194–295 (KSIPLKIFAK…TPFNLQEPFL (102 aa)). Positions 365-551 (ISLPNICEND…FLIENCLRIF (187 aa)) constitute a Rho-GAP domain. Phosphoserine occurs at positions 704 and 730. Disordered regions lie at residues 768-791 (SKKN…NHVK), 926-1014 (RLNL…SRPA), 1052-1123 (KKAK…RHCS), and 1140-1191 (HEEI…TKDI). The span at 934 to 961 (SYSSLSSPGTSPSGSSVSSQDSAFSQIS) shows a compositional bias: low complexity. 2 stretches are compositionally biased toward polar residues: residues 962–981 (EHSV…TFQA) and 1103–1116 (PVQS…SPFQ). Positions 1182-1191 (IEDRYLTKDI) are enriched in basic and acidic residues.

Expressed predominantly in the brain. Lower expression is found in lymph nodes.

Its function is as follows. GTPase activator for the Rho-type GTPases by converting them to an inactive GDP-bound state. This chain is Rho GTPase-activating protein 20 (ARHGAP20), found in Homo sapiens (Human).